The sequence spans 102 residues: Large ribosomal subunit protein bL21 (102 aa).

This sequence belongs to the bacterial ribosomal protein bL21 family. Part of the 50S ribosomal subunit. Contacts protein L20.

This protein binds to 23S rRNA in the presence of protein L20. In Arthrobacter sp. (strain FB24), this protein is Large ribosomal subunit protein bL21.